The following is a 289-amino-acid chain: Type III pantothenate kinase (289 aa).

9 to 16 (DAGNSRVK) serves as a coordination point for ATP. Substrate-binding positions include Tyr106 and 113–116 (GSDR). Asp115 functions as the Proton acceptor in the catalytic mechanism. Thr139 contributes to the ATP binding site. Thr209 is a substrate binding site.

This sequence belongs to the type III pantothenate kinase family. As to quaternary structure, homodimer. The cofactor is NH4(+). K(+) is required as a cofactor.

The protein localises to the cytoplasm. The enzyme catalyses (R)-pantothenate + ATP = (R)-4'-phosphopantothenate + ADP + H(+). The protein operates within cofactor biosynthesis; coenzyme A biosynthesis; CoA from (R)-pantothenate: step 1/5. In terms of biological role, catalyzes the phosphorylation of pantothenate (Pan), the first step in CoA biosynthesis. This Paraburkholderia phymatum (strain DSM 17167 / CIP 108236 / LMG 21445 / STM815) (Burkholderia phymatum) protein is Type III pantothenate kinase.